Reading from the N-terminus, the 46-residue chain is Large ribosomal subunit protein bL34 (46 aa).

This sequence belongs to the bacterial ribosomal protein bL34 family.

The protein is Large ribosomal subunit protein bL34 of Synechococcus sp. (strain JA-2-3B'a(2-13)) (Cyanobacteria bacterium Yellowstone B-Prime).